Reading from the N-terminus, the 110-residue chain is IQ domain-containing protein J (110 aa).

The region spanning 47-67 (ESKVKIIQRAWREYLQRQDPL) is the IQ domain. A disordered region spans residues 63–99 (RQDPLEKRSPSPPSVSSDKLSSSVSMNTFSDSSTPVS). Over residues 76 to 87 (SVSSDKLSSSVS) the composition is skewed to low complexity. The span at 88–99 (MNTFSDSSTPVS) shows a compositional bias: polar residues.

This chain is IQ domain-containing protein J, found in Mus musculus (Mouse).